The sequence spans 241 residues: Phosphoadenosine 5'-phosphosulfate reductase (241 aa).

Cys235 (nucleophile; cysteine thiosulfonate intermediate) is an active-site residue.

This sequence belongs to the PAPS reductase family. CysH subfamily.

The protein resides in the cytoplasm. It catalyses the reaction [thioredoxin]-disulfide + sulfite + adenosine 3',5'-bisphosphate + 2 H(+) = [thioredoxin]-dithiol + 3'-phosphoadenylyl sulfate. Its pathway is sulfur metabolism; hydrogen sulfide biosynthesis; sulfite from sulfate: step 3/3. In terms of biological role, catalyzes the formation of sulfite from phosphoadenosine 5'-phosphosulfate (PAPS) using thioredoxin as an electron donor. The sequence is that of Phosphoadenosine 5'-phosphosulfate reductase from Xanthomonas euvesicatoria pv. vesicatoria (strain 85-10) (Xanthomonas campestris pv. vesicatoria).